The primary structure comprises 86 residues: Large ribosomal subunit protein bL27c (86 aa).

Residues 1 to 20 (MAHKKGSGSTRNGRDSNAQR) form a disordered region. A compositionally biased stretch (polar residues) spans 7 to 19 (SGSTRNGRDSNAQ).

Belongs to the bacterial ribosomal protein bL27 family.

It is found in the plastid. The protein resides in the chloroplast. This Guillardia theta (Cryptophyte) protein is Large ribosomal subunit protein bL27c (rpl27).